Reading from the N-terminus, the 719-residue chain is Polyribonucleotide nucleotidyltransferase (719 aa).

Residues Asp-507 and Asp-513 each contribute to the Mg(2+) site. In terms of domain architecture, KH spans 573 to 633 (PKLELFSVDP…EQIKAAKDYI (61 aa)). Residues 658–719 (GQEFQGIVKK…NGKISVDLCE (62 aa)) form the S1 motif domain.

This sequence belongs to the polyribonucleotide nucleotidyltransferase family. Mg(2+) is required as a cofactor.

It is found in the cytoplasm. The catalysed reaction is RNA(n+1) + phosphate = RNA(n) + a ribonucleoside 5'-diphosphate. Its function is as follows. Involved in mRNA degradation. Catalyzes the phosphorolysis of single-stranded polyribonucleotides processively in the 3'- to 5'-direction. The sequence is that of Polyribonucleotide nucleotidyltransferase from Campylobacter jejuni subsp. jejuni serotype O:23/36 (strain 81-176).